Here is a 1235-residue protein sequence, read N- to C-terminus: Phosphorylase b kinase regulatory subunit alpha, liver isoform (1235 aa).

Serine 697, serine 731, and serine 737 each carry phosphoserine. Positions leucine 808–leucine 838 are calmodulin-binding. The segment covering serine 976–histidine 986 has biased composition (low complexity). The interval serine 976–asparagine 1002 is disordered. Phosphoserine is present on residues serine 984, serine 1016, and serine 1044. Low complexity predominate over residues alanine 1032 to serine 1053. The segment at alanine 1032–tryptophan 1060 is disordered. Positions serine 1059–serine 1099 are calmodulin-binding. Cysteine 1232 carries the S-farnesyl cysteine lipid modification.

This sequence belongs to the phosphorylase b kinase regulatory chain family. Hexadecamer of 4 heterotetramers, each composed of alpha, beta, gamma, and delta subunits. Alpha (PHKA1 or PHKA2) and beta (PHKB) are regulatory subunits, gamma (PHKG1 or PHKG2) is the catalytic subunit, and delta is calmodulin. Post-translationally, although the final Cys may be farnesylated, the terminal tripeptide is probably not removed, and the C-terminus is not methylated. Predominantly expressed in liver and other non-muscle tissues.

The protein resides in the cell membrane. Its pathway is glycan biosynthesis; glycogen metabolism. By phosphorylation of various serine residues and by calcium. In terms of biological role, phosphorylase b kinase catalyzes the phosphorylation of serine in certain substrates, including troponin I. The alpha chain may bind calmodulin. The protein is Phosphorylase b kinase regulatory subunit alpha, liver isoform (PHKA2) of Oryctolagus cuniculus (Rabbit).